We begin with the raw amino-acid sequence, 252 residues long: 3-dehydroquinate dehydratase (252 aa).

3-dehydroquinate contacts are provided by residues Ser-21, 46 to 48, and Arg-82; that span reads EWR. His-143 functions as the Proton donor/acceptor in the catalytic mechanism. The active-site Schiff-base intermediate with substrate is Lys-170. Positions 213, 232, and 236 each coordinate 3-dehydroquinate.

The protein belongs to the type-I 3-dehydroquinase family. Dimer of dimers.

It catalyses the reaction 3-dehydroquinate = 3-dehydroshikimate + H2O. It participates in metabolic intermediate biosynthesis; chorismate biosynthesis; chorismate from D-erythrose 4-phosphate and phosphoenolpyruvate: step 3/7. Its activity is regulated as follows. Inhibited by (2R)-2-methyl-3-dehydroquinic acid. Involved in the third step of the chorismate pathway, which leads to the biosynthesis of aromatic amino acids. Catalyzes the cis-dehydration of 3-dehydroquinate (DHQ) and introduces the first double bond of the aromatic ring to yield 3-dehydroshikimate. The reaction involves the formation of an imine intermediate between the keto group of 3-dehydroquinate and the epsilon-amino group of Lys-170 at the active site. The protein is 3-dehydroquinate dehydratase of Salmonella typhi.